The following is a 154-amino-acid chain: SsrA-binding protein (154 aa).

It belongs to the SmpB family.

Its subcellular location is the cytoplasm. In terms of biological role, required for rescue of stalled ribosomes mediated by trans-translation. Binds to transfer-messenger RNA (tmRNA), required for stable association of tmRNA with ribosomes. tmRNA and SmpB together mimic tRNA shape, replacing the anticodon stem-loop with SmpB. tmRNA is encoded by the ssrA gene; the 2 termini fold to resemble tRNA(Ala) and it encodes a 'tag peptide', a short internal open reading frame. During trans-translation Ala-aminoacylated tmRNA acts like a tRNA, entering the A-site of stalled ribosomes, displacing the stalled mRNA. The ribosome then switches to translate the ORF on the tmRNA; the nascent peptide is terminated with the 'tag peptide' encoded by the tmRNA and targeted for degradation. The ribosome is freed to recommence translation, which seems to be the essential function of trans-translation. The chain is SsrA-binding protein from Treponema denticola (strain ATCC 35405 / DSM 14222 / CIP 103919 / JCM 8153 / KCTC 15104).